The sequence spans 445 residues: 3-phosphoshikimate 1-carboxyvinyltransferase (445 aa).

Residues Lys25, Ser26, and Arg30 each contribute to the 3-phosphoshikimate site. Lys25 contacts phosphoenolpyruvate. Phosphoenolpyruvate contacts are provided by Gly98 and Arg126. The 3-phosphoshikimate site is built by Ser171, Gln173, Asp324, and Lys351. Position 173 (Gln173) interacts with phosphoenolpyruvate. Residue Asp324 is the Proton acceptor of the active site. Phosphoenolpyruvate is bound by residues Arg355 and Arg398.

This sequence belongs to the EPSP synthase family. As to quaternary structure, monomer.

It localises to the cytoplasm. It catalyses the reaction 3-phosphoshikimate + phosphoenolpyruvate = 5-O-(1-carboxyvinyl)-3-phosphoshikimate + phosphate. It functions in the pathway metabolic intermediate biosynthesis; chorismate biosynthesis; chorismate from D-erythrose 4-phosphate and phosphoenolpyruvate: step 6/7. Its function is as follows. Catalyzes the transfer of the enolpyruvyl moiety of phosphoenolpyruvate (PEP) to the 5-hydroxyl of shikimate-3-phosphate (S3P) to produce enolpyruvyl shikimate-3-phosphate and inorganic phosphate. In Hydrogenovibrio crunogenus (strain DSM 25203 / XCL-2) (Thiomicrospira crunogena), this protein is 3-phosphoshikimate 1-carboxyvinyltransferase.